The chain runs to 189 residues: Cyclin-dependent kinase inhibitor 5 (189 aa).

Residues 73-93 are compositionally biased toward polar residues; it reads KQQKQQLIPSVNQCQTKNPRA. A disordered region spans residues 73–107; the sequence is KQQKQQLIPSVNQCQTKNPRASSGPAKKLEPDTTT.

The protein belongs to the CDI family. ICK/KRP subfamily. In terms of assembly, interacts with CYCD4-1. Does not interact with CDKA-1. As to expression, expressed in flowers and at lower levels in roots and leaves.

It localises to the nucleus. It is found in the nucleoplasm. Functionally, inhibits CYCD2-1/CDKA-1 complex kinase activity without interaction with the complex. This Arabidopsis thaliana (Mouse-ear cress) protein is Cyclin-dependent kinase inhibitor 5 (KRP5).